A 421-amino-acid chain; its full sequence is Functional amyloid transporter FapF (421 aa).

The first 24 residues, 1 to 24 (MTQTLSLRAVLCATTLVSPFLAQA), serve as a signal peptide directing secretion. Residues 23-64 (QAATESEVEALKKELLELRQRYEAQQNALMVLEQRVRQVEAQ) are a coiled coil.

It belongs to the amyloid transporter (TC 9.B.153) family.

It is found in the secreted. It localises to the cell surface. Its subcellular location is the cell outer membrane. Transports fibril components across the outer membrane. Upon overexpression of the endogenous six-gene locus (fapA-fapF), cells form large clumps during liquid growth, make large amounts of biofilm and produce amyloid fibrils. This is Functional amyloid transporter FapF from Pseudomonas aeruginosa (strain ATCC 15692 / DSM 22644 / CIP 104116 / JCM 14847 / LMG 12228 / 1C / PRS 101 / PAO1).